The following is a 240-amino-acid chain: Octanoyltransferase (240 aa).

The interval 1–22 (MGTTGTNDGATTPPANTSTPAV) is disordered. Over residues 10–21 (ATTPPANTSTPA) the composition is skewed to low complexity. Positions 51-236 (EKIPDTILLL…NLVDALNGDL (186 aa)) constitute a BPL/LPL catalytic domain. Residues 89 to 96 (RGGRITWH), 166 to 168 (AIG), and 179 to 181 (GVA) contribute to the substrate site. Cys-197 acts as the Acyl-thioester intermediate in catalysis.

It belongs to the LipB family.

The protein resides in the cytoplasm. The enzyme catalyses octanoyl-[ACP] + L-lysyl-[protein] = N(6)-octanoyl-L-lysyl-[protein] + holo-[ACP] + H(+). Its pathway is protein modification; protein lipoylation via endogenous pathway; protein N(6)-(lipoyl)lysine from octanoyl-[acyl-carrier-protein]: step 1/2. In terms of biological role, catalyzes the transfer of endogenously produced octanoic acid from octanoyl-acyl-carrier-protein onto the lipoyl domains of lipoate-dependent enzymes. Lipoyl-ACP can also act as a substrate although octanoyl-ACP is likely to be the physiological substrate. The polypeptide is Octanoyltransferase (Corynebacterium jeikeium (strain K411)).